We begin with the raw amino-acid sequence, 257 residues long: Spindlin-2C (257 aa).

Residues 1 to 47 are disordered; it reads MKTPHKKGAAKEQMGEGVGHHIGSTTIKKKKASQKRQRSRSSSRRSI. Over residues 27–43 the composition is skewed to basic residues; it reads IKKKKASQKRQRSRSSS. Tudor-like domain stretches follow at residues 48–97, 127–176, and 208–253; these read VGCR…LELH, IGKA…YQLL, and IGKH…YDLV. 2 histone H3K4me3 and H3R8me2a binding regions span residues E136 and 244–246; that span reads DFH.

The protein belongs to the SPIN/STSY family. As to quaternary structure, interacts with C11orf84/SPINDOC.

It localises to the nucleus. Its function is as follows. May be involved in the regulation of cell cycle progression. Exhibits H3K4me3-binding activity. The protein is Spindlin-2C (Spin2c) of Mus musculus (Mouse).